The following is a 20-amino-acid chain: Dahlein-5.3 (20 aa).

Expressed by the skin dorsal glands.

The protein localises to the secreted. Functionally, has no antimicrobial activity. Strongly inhibits the formation of NO by neuronal nitric oxide synthase at micromolar concentrations. The chain is Dahlein-5.3 from Ranoidea dahlii (Dahl's aquatic frog).